An 88-amino-acid chain; its full sequence is Putative cancer susceptibility gene HEPN1 protein (88 aa).

In terms of tissue distribution, expressed in liver. Expression is either down-regulated or lost in hepatocellular carcinomas (HCC).

The protein localises to the cytoplasm. This chain is Putative cancer susceptibility gene HEPN1 protein (HEPN1), found in Homo sapiens (Human).